An 835-amino-acid chain; its full sequence is Phenylalanine--tRNA ligase beta subunit (835 aa).

The 115-residue stretch at 44 to 158 (GPVDGPLTVG…LPGADGADVL (115 aa)) folds into the tRNA-binding domain. Positions 414–493 (WSLPPIRIAV…RLEGLEVIRS (80 aa)) constitute a B5 domain. The Mg(2+) site is built by Asp471, Asp477, Glu480, and Glu481. The region spanning 741–834 (SPFPAVLQDV…AAERVGATLR (94 aa)) is the FDX-ACB domain.

Belongs to the phenylalanyl-tRNA synthetase beta subunit family. Type 1 subfamily. Tetramer of two alpha and two beta subunits. It depends on Mg(2+) as a cofactor.

It is found in the cytoplasm. It carries out the reaction tRNA(Phe) + L-phenylalanine + ATP = L-phenylalanyl-tRNA(Phe) + AMP + diphosphate + H(+). This Mycobacterium leprae (strain TN) protein is Phenylalanine--tRNA ligase beta subunit.